We begin with the raw amino-acid sequence, 158 residues long: SsrA-binding protein (158 aa).

It belongs to the SmpB family.

It is found in the cytoplasm. Its function is as follows. Required for rescue of stalled ribosomes mediated by trans-translation. Binds to transfer-messenger RNA (tmRNA), required for stable association of tmRNA with ribosomes. tmRNA and SmpB together mimic tRNA shape, replacing the anticodon stem-loop with SmpB. tmRNA is encoded by the ssrA gene; the 2 termini fold to resemble tRNA(Ala) and it encodes a 'tag peptide', a short internal open reading frame. During trans-translation Ala-aminoacylated tmRNA acts like a tRNA, entering the A-site of stalled ribosomes, displacing the stalled mRNA. The ribosome then switches to translate the ORF on the tmRNA; the nascent peptide is terminated with the 'tag peptide' encoded by the tmRNA and targeted for degradation. The ribosome is freed to recommence translation, which seems to be the essential function of trans-translation. The protein is SsrA-binding protein of Caldicellulosiruptor bescii (strain ATCC BAA-1888 / DSM 6725 / KCTC 15123 / Z-1320) (Anaerocellum thermophilum).